The following is a 245-amino-acid chain: Brasilane terpene glycosides biosynthesis cluster protein D (245 aa).

C3H1-type zinc fingers lie at residues 121-152 (KELK…HDNV) and 161-185 (ICHF…HYPA). Residues 186–245 (PHRVTAPMPSKKKSKKLRSSVADDASHPDLGKARRHDPRDDEQNDEVWRNQGRARPGQEW) are disordered. Positions 209–226 (DASHPDLGKARRHDPRDD) are enriched in basic and acidic residues.

Part of the gene cluster that mediates the biosynthesis of the brasilane terpene glycosides brasilane D and E. The biosynthesis starts with the activity of the terpene cyclase braA that converts farnesyl pyrophosphate into the sesquiterpene alcohol trichobrasilenol. Subsequently, trichobrasilenol is glycosylated by the O-glycosyltransferase braB putatively using UDP-GlcNAc as sugar donor to yield brasilane A. The latter then undergoes two rounds of oxidation performed by the cytochrome P450 monooxygenase braC. In the first round braC hydroxylates C-12 forming brasilane D, which serves as substrate in the second round to establish the epoxide at the bond between C-5 and C-10 and oxidize the alcohol at C-12 to an aldehyde leading to the final product brasilane E. The sequence is that of Brasilane terpene glycosides biosynthesis cluster protein D from Annulohypoxylon truncatum (Hypoxylon truncatum).